The following is a 161-amino-acid chain: NADH-quinone oxidoreductase subunit I (161 aa).

2 4Fe-4S ferredoxin-type domains span residues 52–82 and 92–121; these read LRRYPNGEERCIACKLCEAVCPALAITIESE and KRYDIDLTKCIFCGFCEEACPVDAVVETRV. Residues Cys-62, Cys-65, Cys-68, Cys-72, Cys-101, Cys-104, Cys-107, and Cys-111 each contribute to the [4Fe-4S] cluster site.

Belongs to the complex I 23 kDa subunit family. NDH-1 is composed of 14 different subunits. Subunits NuoA, H, J, K, L, M, N constitute the membrane sector of the complex. It depends on [4Fe-4S] cluster as a cofactor.

The protein localises to the cell inner membrane. The catalysed reaction is a quinone + NADH + 5 H(+)(in) = a quinol + NAD(+) + 4 H(+)(out). Its function is as follows. NDH-1 shuttles electrons from NADH, via FMN and iron-sulfur (Fe-S) centers, to quinones in the respiratory chain. The immediate electron acceptor for the enzyme in this species is believed to be ubiquinone. Couples the redox reaction to proton translocation (for every two electrons transferred, four hydrogen ions are translocated across the cytoplasmic membrane), and thus conserves the redox energy in a proton gradient. This chain is NADH-quinone oxidoreductase subunit I, found in Aromatoleum aromaticum (strain DSM 19018 / LMG 30748 / EbN1) (Azoarcus sp. (strain EbN1)).